The chain runs to 327 residues: 2-keto-3-deoxygluconate permease (327 aa).

A run of 10 helical transmembrane segments spans residues 10-30, 42-62, 73-93, 95-115, 139-159, 163-183, 199-219, 224-244, 254-274, and 289-309; these read IPGG…TFSP, GMIT…GASI, KSGT…AIAS, IIPE…LALV, AGAF…IILG, IASF…VGFA, VQTL…LTVI, LLGI…LIIA, TAGI…VLIA, and SLVA…TSIW.

It belongs to the KdgT transporter family.

It is found in the cell inner membrane. It carries out the reaction 2-dehydro-3-deoxy-D-gluconate(in) + H(+)(in) = 2-dehydro-3-deoxy-D-gluconate(out) + H(+)(out). Catalyzes the proton-dependent uptake of 2-keto-3-deoxygluconate (KDG) into the cell. The protein is 2-keto-3-deoxygluconate permease of Escherichia coli O157:H7.